Here is a 45-residue protein sequence, read N- to C-terminus: MTQRTLGGTNRKQKRTSGFRARMRTHNGRKVIQARRSKGRHRLAV.

Polar residues predominate over residues 1–10 (MTQRTLGGTN). The tract at residues 1–45 (MTQRTLGGTNRKQKRTSGFRARMRTHNGRKVIQARRSKGRHRLAV) is disordered. Residues 11-45 (RKQKRTSGFRARMRTHNGRKVIQARRSKGRHRLAV) are compositionally biased toward basic residues.

This sequence belongs to the bacterial ribosomal protein bL34 family.

The chain is Large ribosomal subunit protein bL34 (rpmH) from Synechocystis sp. (strain ATCC 27184 / PCC 6803 / Kazusa).